The primary structure comprises 264 residues: 3-methyl-2-oxobutanoate hydroxymethyltransferase (264 aa).

Positions 44 and 83 each coordinate Mg(2+). 3-methyl-2-oxobutanoate contacts are provided by residues 44–45 (DS), Asp-83, and Lys-111. Glu-113 lines the Mg(2+) pocket. The Proton acceptor role is filled by Glu-180.

This sequence belongs to the PanB family. Homodecamer; pentamer of dimers. The cofactor is Mg(2+).

It localises to the cytoplasm. The catalysed reaction is 3-methyl-2-oxobutanoate + (6R)-5,10-methylene-5,6,7,8-tetrahydrofolate + H2O = 2-dehydropantoate + (6S)-5,6,7,8-tetrahydrofolate. Its pathway is cofactor biosynthesis; (R)-pantothenate biosynthesis; (R)-pantoate from 3-methyl-2-oxobutanoate: step 1/2. Functionally, catalyzes the reversible reaction in which hydroxymethyl group from 5,10-methylenetetrahydrofolate is transferred onto alpha-ketoisovalerate to form ketopantoate. The sequence is that of 3-methyl-2-oxobutanoate hydroxymethyltransferase from Marinobacter nauticus (strain ATCC 700491 / DSM 11845 / VT8) (Marinobacter aquaeolei).